Consider the following 115-residue polypeptide: Nucleoid-associated protein P9211_00201 (115 aa).

The protein belongs to the YbaB/EbfC family. In terms of assembly, homodimer.

The protein localises to the cytoplasm. The protein resides in the nucleoid. Binds to DNA and alters its conformation. May be involved in regulation of gene expression, nucleoid organization and DNA protection. In Prochlorococcus marinus (strain MIT 9211), this protein is Nucleoid-associated protein P9211_00201.